A 234-amino-acid polypeptide reads, in one-letter code: Thiamine-phosphate synthase (234 aa).

4-amino-2-methyl-5-(diphosphooxymethyl)pyrimidine is bound by residues 65–69 (QYRNK) and Asn97. The Mg(2+) site is built by Asp98 and Asp117. Position 136 (Ser136) interacts with 4-amino-2-methyl-5-(diphosphooxymethyl)pyrimidine. 2-[(2R,5Z)-2-carboxy-4-methylthiazol-5(2H)-ylidene]ethyl phosphate is bound at residue 163–165 (SHT). Lys166 is a 4-amino-2-methyl-5-(diphosphooxymethyl)pyrimidine binding site. 2-[(2R,5Z)-2-carboxy-4-methylthiazol-5(2H)-ylidene]ethyl phosphate contacts are provided by residues Gly192 and 212-213 (IS).

This sequence belongs to the thiamine-phosphate synthase family. Mg(2+) is required as a cofactor.

It carries out the reaction 2-[(2R,5Z)-2-carboxy-4-methylthiazol-5(2H)-ylidene]ethyl phosphate + 4-amino-2-methyl-5-(diphosphooxymethyl)pyrimidine + 2 H(+) = thiamine phosphate + CO2 + diphosphate. The catalysed reaction is 2-(2-carboxy-4-methylthiazol-5-yl)ethyl phosphate + 4-amino-2-methyl-5-(diphosphooxymethyl)pyrimidine + 2 H(+) = thiamine phosphate + CO2 + diphosphate. The enzyme catalyses 4-methyl-5-(2-phosphooxyethyl)-thiazole + 4-amino-2-methyl-5-(diphosphooxymethyl)pyrimidine + H(+) = thiamine phosphate + diphosphate. The protein operates within cofactor biosynthesis; thiamine diphosphate biosynthesis; thiamine phosphate from 4-amino-2-methyl-5-diphosphomethylpyrimidine and 4-methyl-5-(2-phosphoethyl)-thiazole: step 1/1. Condenses 4-methyl-5-(beta-hydroxyethyl)thiazole monophosphate (THZ-P) and 2-methyl-4-amino-5-hydroxymethyl pyrimidine pyrophosphate (HMP-PP) to form thiamine monophosphate (TMP). The sequence is that of Thiamine-phosphate synthase from Xylella fastidiosa (strain Temecula1 / ATCC 700964).